We begin with the raw amino-acid sequence, 395 residues long: RNA pseudouridine synthase 7 (395 aa).

A disordered region spans residues 1–21 (MKRKQQEDDNDDGVEKAVSPV). An S4 RNA-binding domain is found at 74 to 136 (KTIVDLFADE…HEPPVMIDDV (63 aa)). The active site involves Asp-187. The span at 244 to 255 (EGRSTAEDANSS) shows a compositional bias: polar residues. The interval 244–263 (EGRSTAEDANSSGDDKKVKG) is disordered.

The protein belongs to the pseudouridine synthase RluA family.

The enzyme catalyses a uridine in RNA = a pseudouridine in RNA. The sequence is that of RNA pseudouridine synthase 7 from Arabidopsis thaliana (Mouse-ear cress).